Consider the following 181-residue polypeptide: Oligoribonuclease (181 aa).

The Exonuclease domain occupies 8 to 171 (LIWIDLEMTG…QDIQESIAEL (164 aa)). Tyrosine 129 is a catalytic residue.

Belongs to the oligoribonuclease family.

It localises to the cytoplasm. Its function is as follows. 3'-to-5' exoribonuclease specific for small oligoribonucleotides. This chain is Oligoribonuclease, found in Shewanella sp. (strain ANA-3).